The sequence spans 375 residues: Putative F-box only protein 11 (375 aa).

The F-box domain occupies Met-1–His-46.

This is Putative F-box only protein 11 (FBX11) from Arabidopsis thaliana (Mouse-ear cress).